Here is a 306-residue protein sequence, read N- to C-terminus: Ribonuclease H2 subunit B (306 aa).

The tract at residues Leu232 to Lys285 is disordered. Residues Asp259–Ser269 show a composition bias toward basic and acidic residues.

The protein belongs to the RNase H2 subunit B family. As to quaternary structure, the RNase H2 complex is a heterotrimer composed of the catalytic subunit RNASEH2A and the non-catalytic subunits RNASEH2B and RNASEH2C.

Its subcellular location is the nucleus. Its function is as follows. Non catalytic subunit of RNase H2, an endonuclease that specifically degrades the RNA of RNA:DNA hybrids. Participates in DNA replication, possibly by mediating the removal of lagging-strand Okazaki fragment RNA primers during DNA replication. Mediates the excision of single ribonucleotides from DNA:RNA duplexes. The chain is Ribonuclease H2 subunit B (rnaseh2b) from Xenopus laevis (African clawed frog).